The following is a 3907-amino-acid chain: A-kinase anchor protein 9 (3907 aa).

A compositionally biased stretch (basic and acidic residues) spans 1–14; the sequence is MEDEERQKKLEAGK. Residues 1–57 are disordered; sequence MEDEERQKKLEAGKAKLAQFRQRKAQSDGQSPSKKQKKKRKTSSSKHDVSAHHDLNI. The segment covering 34 to 44 has biased composition (basic residues); sequence KKQKKKRKTSS. The segment covering 45–56 has biased composition (basic and acidic residues); the sequence is SKHDVSAHHDLN. Coiled coils occupy residues 152-902, 932-1010, 1088-1173, 1241-1268, 1324-1380, 1422-1447, and 1573-1647; these read DSPT…ELHL, EVVE…ENVQ, QPSE…QTMK, ELQD…EEYN, KLSS…ESTV, VKEE…VAKV, and SMDA…DNEN. Serine 153 carries the phosphoserine modification. Phosphoserine is present on serine 1327. The span at 1682–1692 shows a compositional bias: low complexity; it reads STQTQNGNENQ. The disordered stretch occupies residues 1682–1713; sequence STQTQNGNENQGEVEEQTFKEKELDRKPEDVP. Residues 1698–1711 show a composition bias toward basic and acidic residues; it reads QTFKEKELDRKPED. Position 1765 is a phosphoserine (serine 1765). 6 coiled-coil regions span residues 1845 to 2443, 2532 to 2549, 2591 to 2764, 3061 to 3088, 3120 to 3466, and 3583 to 3685; these read NISS…VEKI, ETEM…IVEE, QLRE…SKKA, LNCL…ADRR, ELLE…NLNE, and SLTE…NDSL. Residues 2542-2555 are PKA-RII subunit binding domain; sequence NLQKIVEEKVAAAL. The tract at residues 3377 to 3405 is disordered; the sequence is RQQMEKDRQVHRKTLQTEQEANTEGQKKM. A phosphoserine mark is found at serine 3690, serine 3842, serine 3865, and serine 3897.

In terms of assembly, interacts with the regulatory region of protein kinase N (PKN), protein phosphatase 2A (PP2A), protein phosphatase 1 (PP1) and the immature non-phosphorylated form of PKC epsilon. Interacts with CIP4 and FNBP1. Interacts with chloride intracellular channel proteins CLIC1, CLIC4 and CLIC5. CSNK1D binding promotes its centrosomal subcellular location. Interacts with GM130/GOLGA2; leading to recruitment to the Golgi apparatus. Interacts with KCNQ1; targets protein kinase A (PKA) catalytic and regulatory subunits and protein phosphatase 1 (PP1), to the heterodimer KCNQ1-KCNE1. Interacts with PDE4DIP isoform 13/MMG8/SMYLE; this interaction stabilizes both proteins. In complex with PDE4DIP isoform 13, recruits CAMSAP2 to the Golgi apparatus. Forms a pericentrosomal complex with CDK5RAP2, EB1/MAPRE1 and PDE4DIP isoform 13; within this complex, MAPRE1 binding to CDK5RAP2 may be mediated by PDE4DIP. Interacts with MAPRE1 and MAPRE3. Interacts (via C-terminus) with CAMSAP2; this interaction is much stronger in the presence of PDE4DIP isoform 13/MMG8/SMYLE. Interacts with CAMSAP3. Interacts (via C-terminus) with the gamma-tubulin ring complex (gamma-TuRC), composed of gamma-tubulin, TUBGCP2, TUBGCP3, TUBGCP4, TUBGCP5 and TUBGCP6. Widely expressed. Isoform 4: Highly expressed in skeletal muscle and in pancreas.

It is found in the golgi apparatus. The protein localises to the cytoplasm. Its subcellular location is the cytoskeleton. It localises to the microtubule organizing center. The protein resides in the centrosome. Its function is as follows. Scaffolding protein that assembles several protein kinases and phosphatases on the centrosome and Golgi apparatus. Required to maintain the integrity of the Golgi apparatus. Required for microtubule nucleation at the cis-side of the Golgi apparatus. Required for association of the centrosomes with the poles of the bipolar mitotic spindle during metaphase. In complex with PDE4DIP isoform 13/MMG8/SMYLE, recruits CAMSAP2 to the Golgi apparatus and tethers non-centrosomal minus-end microtubules to the Golgi, an important step for polarized cell movement. In complex with PDE4DIP isoform 13/MMG8/SMYLE, EB1/MAPRE1 and CDK5RAP2, contributes to microtubules nucleation and extension also from the centrosome to the cell periphery. In terms of biological role, associated with the N-methyl-D-aspartate receptor and is specifically found in the neuromuscular junction (NMJ) as well as in neuronal synapses, suggesting a role in the organization of postsynaptic specializations. The chain is A-kinase anchor protein 9 (AKAP9) from Homo sapiens (Human).